The chain runs to 89 residues: Small ribosomal subunit protein uS15 (89 aa).

Belongs to the universal ribosomal protein uS15 family. Part of the 30S ribosomal subunit. Forms a bridge to the 50S subunit in the 70S ribosome, contacting the 23S rRNA.

Its function is as follows. One of the primary rRNA binding proteins, it binds directly to 16S rRNA where it helps nucleate assembly of the platform of the 30S subunit by binding and bridging several RNA helices of the 16S rRNA. In terms of biological role, forms an intersubunit bridge (bridge B4) with the 23S rRNA of the 50S subunit in the ribosome. The chain is Small ribosomal subunit protein uS15 from Shewanella amazonensis (strain ATCC BAA-1098 / SB2B).